We begin with the raw amino-acid sequence, 532 residues long: uncharacterized protein (532 aa).

A run of 14 helical transmembrane segments spans residues 25–45, 65–85, 109–129, 134–154, 179–199, 203–223, 248–268, 302–322, 344–364, 371–391, 392–412, 425–445, 459–479, and 494–514; these read ITKI…GDVG, SGFP…NHHT, AVPI…QVAA, LFPF…MLPS, KGAS…AGSL, IILG…RQNE, LLLF…SGGE, VPYI…EKIT, KPVN…QVFS, SLAV…FPAI, AVGA…PRYG, AAVA…DKLR, SAVL…TGRG, and AVFI…LNSV.

This sequence belongs to the polysaccharide synthase family.

Its subcellular location is the cell membrane. This is an uncharacterized protein from Bacillus subtilis (strain 168).